The chain runs to 271 residues: Mannosyl-3-phosphoglycerate phosphatase (271 aa).

Catalysis depends on Asp-13, which acts as the Nucleophile. Mg(2+) is bound by residues Asp-13, Asp-15, and Asp-214.

This sequence belongs to the HAD-like hydrolase superfamily. MPGP family. The cofactor is Mg(2+).

It localises to the cytoplasm. It catalyses the reaction 2-O-(alpha-D-mannosyl)-3-phosphoglycerate + H2O = (2R)-2-O-(alpha-D-mannosyl)-glycerate + phosphate. The protein is Mannosyl-3-phosphoglycerate phosphatase (yedP) of Shigella boydii serotype 4 (strain Sb227).